We begin with the raw amino-acid sequence, 385 residues long: S-adenosylmethionine synthase (385 aa).

H16 is a binding site for ATP. D18 lines the Mg(2+) pocket. E44 contributes to the K(+) binding site. Residues E57 and Q100 each coordinate L-methionine. The interval 100 to 110 is flexible loop; that stretch reads QSPDINQGVDK. ATP is bound by residues 165–167, 231–232, D240, 246–247, A263, and K267; these read DAK, RF, and RK. D240 is a binding site for L-methionine. K271 contacts L-methionine.

It belongs to the AdoMet synthase family. In terms of assembly, homotetramer; dimer of dimers. Mg(2+) is required as a cofactor. Requires K(+) as cofactor.

The protein localises to the cytoplasm. The catalysed reaction is L-methionine + ATP + H2O = S-adenosyl-L-methionine + phosphate + diphosphate. Its pathway is amino-acid biosynthesis; S-adenosyl-L-methionine biosynthesis; S-adenosyl-L-methionine from L-methionine: step 1/1. In terms of biological role, catalyzes the formation of S-adenosylmethionine (AdoMet) from methionine and ATP. The overall synthetic reaction is composed of two sequential steps, AdoMet formation and the subsequent tripolyphosphate hydrolysis which occurs prior to release of AdoMet from the enzyme. This is S-adenosylmethionine synthase from Vibrio cholerae serotype O1 (strain ATCC 39315 / El Tor Inaba N16961).